The chain runs to 880 residues: Leucine--tRNA ligase (880 aa).

A 'HIGH' region motif is present at residues 46-56 (PYPSGALHMGH). A 'KMSKS' region motif is present at residues 638-642 (KMSKS). ATP is bound at residue Lys641.

It belongs to the class-I aminoacyl-tRNA synthetase family.

The protein resides in the cytoplasm. It catalyses the reaction tRNA(Leu) + L-leucine + ATP = L-leucyl-tRNA(Leu) + AMP + diphosphate. The sequence is that of Leucine--tRNA ligase from Stenotrophomonas maltophilia (strain K279a).